The following is a 723-amino-acid chain: DNA-binding protein RFX2 (723 aa).

The segment at 1 to 46 is disordered; it reads MQNSEGGADSPASVALRPSAAAPPVPASPQRVLVQAASSNPKGAQM. Residues 10 to 20 are compositionally biased toward low complexity; sequence SPASVALRPSA. At Ser28 the chain carries Phosphoserine. The RFX-type winged-helix DNA-binding region spans 199-274; the sequence is HLQWLLDNYE…YHYYGIRLKP (76 aa). The disordered stretch occupies residues 292–332; it reads QQPMHQKPRYRPAQKTDSLGDSGSHSGLHSTPEQTMAVQSQ. A compositionally biased stretch (low complexity) spans 308–321; that stretch reads DSLGDSGSHSGLHS. Positions 322–332 are enriched in polar residues; the sequence is TPEQTMAVQSQ. Position 416 is a phosphoserine (Ser416). The disordered stretch occupies residues 688–723; sequence MGDEQRGSEAGPDARSLGEPLVKRERSDPNHSLQGI.

It belongs to the RFX family. Homodimer; probably only forms homodimers in testis. Heterodimer; heterodimerizes with RFX1 and RFX3.

The protein resides in the nucleus. The protein localises to the cytoplasm. Its function is as follows. Transcription factor that acts as a key regulator of spermatogenesis. Acts by regulating expression of genes required for the haploid phase during spermiogenesis, such as genes required for cilium assembly and function. Recognizes and binds the X-box, a regulatory motif with DNA sequence 5'-GTNRCC(0-3N)RGYAAC-3' present on promoters. Probably activates transcription of the testis-specific histone gene H1-6. In Homo sapiens (Human), this protein is DNA-binding protein RFX2 (RFX2).